We begin with the raw amino-acid sequence, 209 residues long: Ribosomal RNA large subunit methyltransferase E (209 aa).

Positions 63, 65, 83, 99, and 124 each coordinate S-adenosyl-L-methionine. The active-site Proton acceptor is the Lys-164.

It belongs to the class I-like SAM-binding methyltransferase superfamily. RNA methyltransferase RlmE family.

The protein resides in the cytoplasm. The enzyme catalyses uridine(2552) in 23S rRNA + S-adenosyl-L-methionine = 2'-O-methyluridine(2552) in 23S rRNA + S-adenosyl-L-homocysteine + H(+). Its function is as follows. Specifically methylates the uridine in position 2552 of 23S rRNA at the 2'-O position of the ribose in the fully assembled 50S ribosomal subunit. The sequence is that of Ribosomal RNA large subunit methyltransferase E from Escherichia coli O81 (strain ED1a).